A 612-amino-acid polypeptide reads, in one-letter code: DNA mismatch repair protein MutL (612 aa).

Belongs to the DNA mismatch repair MutL/HexB family.

In terms of biological role, this protein is involved in the repair of mismatches in DNA. It is required for dam-dependent methyl-directed DNA mismatch repair. May act as a 'molecular matchmaker', a protein that promotes the formation of a stable complex between two or more DNA-binding proteins in an ATP-dependent manner without itself being part of a final effector complex. In Afipia carboxidovorans (strain ATCC 49405 / DSM 1227 / KCTC 32145 / OM5) (Oligotropha carboxidovorans), this protein is DNA mismatch repair protein MutL.